Consider the following 142-residue polypeptide: Translation initiation factor 2 subunit beta (142 aa).

This sequence belongs to the eIF-2-beta/eIF-5 family. In terms of assembly, heterotrimer composed of an alpha, a beta and a gamma chain.

In terms of biological role, eIF-2 functions in the early steps of protein synthesis by forming a ternary complex with GTP and initiator tRNA. This is Translation initiation factor 2 subunit beta from Thermococcus kodakarensis (strain ATCC BAA-918 / JCM 12380 / KOD1) (Pyrococcus kodakaraensis (strain KOD1)).